Here is a 148-residue protein sequence, read N- to C-terminus: 3-hydroxyacyl-[acyl-carrier-protein] dehydratase FabZ (148 aa).

The active site involves His50.

This sequence belongs to the thioester dehydratase family. FabZ subfamily.

Its subcellular location is the cytoplasm. It catalyses the reaction a (3R)-hydroxyacyl-[ACP] = a (2E)-enoyl-[ACP] + H2O. Functionally, involved in unsaturated fatty acids biosynthesis. Catalyzes the dehydration of short chain beta-hydroxyacyl-ACPs and long chain saturated and unsaturated beta-hydroxyacyl-ACPs. This Levilactobacillus brevis (strain ATCC 367 / BCRC 12310 / CIP 105137 / JCM 1170 / LMG 11437 / NCIMB 947 / NCTC 947) (Lactobacillus brevis) protein is 3-hydroxyacyl-[acyl-carrier-protein] dehydratase FabZ.